Reading from the N-terminus, the 661-residue chain is tRNA uridine 5-carboxymethylaminomethyl modification enzyme MnmG (661 aa).

Residues 16 to 21 (GAGHAG), V128, and S183 each bind FAD. The segment at 206–230 (PRVNGNTIDYSKTEEEPGDKTPRHF) is disordered. The segment covering 216-230 (SKTEEEPGDKTPRHF) has biased composition (basic and acidic residues). 277-291 (GPRYCPSIEDKVVRF) is a binding site for NAD(+). Position 374 (Q374) interacts with FAD.

This sequence belongs to the MnmG family. In terms of assembly, homodimer. Heterotetramer of two MnmE and two MnmG subunits. FAD is required as a cofactor.

The protein localises to the cytoplasm. In terms of biological role, NAD-binding protein involved in the addition of a carboxymethylaminomethyl (cmnm) group at the wobble position (U34) of certain tRNAs, forming tRNA-cmnm(5)s(2)U34. The protein is tRNA uridine 5-carboxymethylaminomethyl modification enzyme MnmG of Lactobacillus helveticus (strain DPC 4571).